The sequence spans 320 residues: MQTRNTFSSIKEEITRSISVSLMIYIITWAPVSNAYPIFAQQGYENPREATGRIVCANCHLANKPVDIEVPQAVLPDTVFEAVVRIPYDMQLKQVLANGKKGGLNVGAVLILPEGFELAPPDRISPEIKEKMGNLSFQSYRPTKKNILVIGPVPGQKYSEITFPILSPDPATKKDVHFLKYPIYVGGNRGRGQIYPDGSKSNNNVYNATAAGIVSKIIRKEKGGYEITIVDAANGRQVVDIIPPGPELLVSEGESIKLDQPLTSNPNVGGFGQGDAEIVLQDPLRVQGLLFFFASVILAQIFLVLKKKQFEKVQLSEMNF.

The N-terminal stretch at 1-35 (MQTRNTFSSIKEEITRSISVSLMIYIITWAPVSNA) is a signal peptide. 4 residues coordinate heme: tyrosine 36, cysteine 56, cysteine 59, and histidine 60. Residues 286 to 306 (VQGLLFFFASVILAQIFLVLK) traverse the membrane as a helical segment.

It belongs to the cytochrome f family. The 4 large subunits of the cytochrome b6-f complex are cytochrome b6, subunit IV (17 kDa polypeptide, petD), cytochrome f and the Rieske protein, while the 4 small subunits are PetG, PetL, PetM and PetN. The complex functions as a dimer. Requires heme as cofactor.

The protein resides in the plastid. It is found in the chloroplast thylakoid membrane. Functionally, component of the cytochrome b6-f complex, which mediates electron transfer between photosystem II (PSII) and photosystem I (PSI), cyclic electron flow around PSI, and state transitions. The sequence is that of Cytochrome f from Cucumis sativus (Cucumber).